The chain runs to 466 residues: Acetylornithine aminotransferase, mitochondrial (466 aa).

Lys308 carries the post-translational modification N6-(pyridoxal phosphate)lysine.

The protein belongs to the class-III pyridoxal-phosphate-dependent aminotransferase family. The cofactor is pyridoxal 5'-phosphate.

The protein resides in the mitochondrion matrix. The catalysed reaction is N(2)-acetyl-L-ornithine + 2-oxoglutarate = N-acetyl-L-glutamate 5-semialdehyde + L-glutamate. It participates in amino-acid biosynthesis; L-arginine biosynthesis; N(2)-acetyl-L-ornithine from L-glutamate: step 4/4. The sequence is that of Acetylornithine aminotransferase, mitochondrial (ARG8) from Debaryomyces hansenii (strain ATCC 36239 / CBS 767 / BCRC 21394 / JCM 1990 / NBRC 0083 / IGC 2968) (Yeast).